The following is a 304-amino-acid chain: ULP1-interacting protein 4 (304 aa).

Positions 72 to 269 (DEYPKEVDEH…SIVKEGDANT (198 aa)) are disordered. The segment covering 73–83 (EYPKEVDEHSN) has biased composition (basic and acidic residues). Positions 129-149 (TPSLKGNVTFPSPKTAISQDG) are enriched in polar residues. Serine 140 is modified (phosphoserine). A compositionally biased stretch (basic and acidic residues) spans 155–183 (ETTRKERKYEHAPLNEVPVERDPKEENKE). A phosphoserine mark is found at serine 185 and serine 205.

In terms of assembly, interacts with ULP1.

The protein resides in the endoplasmic reticulum membrane. The protein localises to the mitochondrion outer membrane. It localises to the nucleus envelope. The sequence is that of ULP1-interacting protein 4 (UIP4) from Saccharomyces cerevisiae (strain ATCC 204508 / S288c) (Baker's yeast).